The chain runs to 1388 residues: MSERNQQDGQFDKLTIKIASDDVIRNEWSRGEIKKPETINYRTFKPEKGGLFCEKIFGPTRDWECACGKYKKIKHKGIVCDRCGVEVTLSKVRRERMAHIDLAVPVVHIWFFKTMPSRIGNVLGMTSADLERVIYYEEYVVINPGQTDLERKQLLNDTEYREAQEKWGRDSFVAKMGGEAIRDLLASEDLQTQLVELKDKLRKTKSQQARMKLAKRLKIIESFVSSDNKPEWMIMSCVPVIPPDLRPLVPLDGGRFATSDLNDLYRRVINRNNRLKAILKLKTPDVIVRNEKRMLQEAVDALFDNGRHGHPVMGAGNRPLKSLSEMLKGKQGRFRQNLLGKRVDYSGRSVIIVGPELKFNQCGLPKLMALELFEPFIVKRLKDQGYVYTIRSAKKMIQRHAPEVWDVLEDIIKGHPVLLNRAPTLHRLGIQAFEPVLIEGKAIRIHPLVCSAFNADFDGDQMAVYVPLSIEAQLEAKLLMMAPDNIFLPSSGKPVAVPSQDMTLGLYYLMLDPLYIRENHELKTRVFRDSEEVLLALQASGSYNWYEEGSKSPNGENRSDYLRGIRIHEKIKLRTENGIIETTPGRVVFNTIVPKELGFQNYSLPKKKMGELVMQCYKKAGLEATVRFLDNLKSIGFAEATKSALSMGVCDVKIPTIKQKILHDAHERVAVVRKQYEDGIITEGERYSKTISIWTEVSDVLSEELFKLISEVKDSTMNPLYLMMDSGARGNKSQIRQLGALRGLMAKPSGDIIESPITSNFREGLSVIEFSISSHGARKGLADTALKTADSGYLTRRLVDVAQDVIITEDDCGTLNGIDVSAIKQGQEELLPLKDRIFGRTVCEDIYQPGDSTKLLAKSGDTLTVLQAEAIDDSGIESIRIRSVLTCETRRGVCAKCYGINLANSRSISMGEAVGIIAAQSIGEPGTQLTMRTFHLGGIASAGLTPEIVADDNGILVYTDLRTVKTDEGNWVALNKNGRLNIVKDEGRTLDEYKKLLSTKSIEPLQAFNVELGTKILLEEGTKVKPGTRVAEWEQHNIPIICDRPGYVRYEDLVEGLSTERDVNKQTGQAELIVKQHRGELHPQVAIYADQACEDLVGTYPLPAGAIISVEEGEFATAGKMLARLPRSAIKTKDITGGLPRVAELFEARKPKDSAEIAKIDGVVDFRGVQKNKRIVVVRDEMTGMEEEHLISHTKHLIIQRGDHVVKGQQLTDGLVIPHEILDICGVRELQKYLVNQVQEVYRLQGVDINDKHIEIIVRQMLKKVRVIDPGDTSLLYGEEVDKKEFEVENQKVSQEGGKAAQATPVLLGITKASLSTESFISAASFQDTTRVLTEAACAGKTDYLVGFKENVIMGHIIPGGTGFDRHKRVKMFVDSEQEQGLEFNFAD.

Zn(2+) is bound by residues Cys65, Cys67, Cys80, and Cys83. Mg(2+) is bound by residues Asp456, Asp458, and Asp460. Cys812, Cys887, Cys894, and Cys897 together coordinate Zn(2+).

The protein belongs to the RNA polymerase beta' chain family. In terms of assembly, the RNAP catalytic core consists of 2 alpha, 1 beta, 1 beta' and 1 omega subunit. When a sigma factor is associated with the core the holoenzyme is formed, which can initiate transcription. Mg(2+) is required as a cofactor. Zn(2+) serves as cofactor.

The enzyme catalyses RNA(n) + a ribonucleoside 5'-triphosphate = RNA(n+1) + diphosphate. Functionally, DNA-dependent RNA polymerase catalyzes the transcription of DNA into RNA using the four ribonucleoside triphosphates as substrates. In Protochlamydia amoebophila (strain UWE25), this protein is DNA-directed RNA polymerase subunit beta'.